Consider the following 162-residue polypeptide: UPF0114 protein PST_0950 (162 aa).

3 consecutive transmembrane segments (helical) span residues 15–35, 53–73, and 136–156; these read LLAP…IKFF, LVLT…LVMV, and LMWY…MGYM.

Belongs to the UPF0114 family.

The protein localises to the cell membrane. In Stutzerimonas stutzeri (strain A1501) (Pseudomonas stutzeri), this protein is UPF0114 protein PST_0950.